A 714-amino-acid chain; its full sequence is Nucleolin (714 aa).

The disordered stretch occupies residues 1 to 303 (MVKLAKAGKT…AKKQKVEGSE (303 aa)). An N6-acetyllysine mark is found at K9, K15, and K16. A compositionally biased stretch (acidic residues) spans 24–42 (VEEDSEDEEMSEEEDDSSG). Phosphoserine is present on residues S28, S34, S40, and S41. Residues 55 to 106 (ATATPAKKVVVSQTKKVAVPTPAKKAAVTPGKKAAATPAKKAVTPAKAVATP) are compositionally biased toward low complexity. Copy 1 of the repeat occupies 57–64 (ATPAKKVV). Residues 57–134 (ATPAKKVVVS…GAVTPAKGAK (78 aa)) form an 8 X 8 AA tandem repeats of X-T-P-X-K-K-X-X region. The residue at position 66 (S66) is a Phosphoserine. Phosphothreonine is present on residues T68, T75, T83, and T91. 3 consecutive repeat copies span residues 74 to 81 (PTPAKKAA), 82 to 89 (VTPGKKAA), and 90 to 97 (ATPAKKAV). At K95 the chain carries N6-acetyllysine. At T98 the chain carries Phosphothreonine. One copy of the 5; truncated repeat lies at 98-103 (TPAKAV). N6-acetyllysine is present on K101. Repeat 6 spans residues 104–111 (ATPGKKGA). The residue at position 105 (T105) is a Phosphothreonine. N6-acetyllysine is present on K108. At T112 the chain carries Phosphothreonine. K115 is modified (N6-acetyllysine). Tandem repeats lie at residues 119–126 (ATPGKKGA) and 127–134 (VTPAKGAK). T120 is subject to Phosphothreonine. K123 carries the N6-acetyllysine modification. A phosphoserine mark is found at S144 and S157. The segment covering 144–170 (SDEDEDDDDDEDDSDEDEEDEEEDEFE) has biased composition (acidic residues). Residues 171–187 (PPVVKGKQGKVAAAAPA) show a composition bias toward low complexity. S188 carries the post-translational modification Phosphoserine. The segment covering 188-216 (SEDEDEEEDEEEEEEDEEEEDDSEEEEAM) has biased composition (acidic residues). At T219 the chain carries Phosphothreonine. Positions 240 to 272 (EEDDDDEEEDEDEEEDEEEEEDEEEEEEEEEEE) are enriched in acidic residues. Over residues 285 to 301 (MTKQKEVPEAKKQKVEG) the composition is skewed to basic and acidic residues. Residue K298 forms a Glycyl lysine isopeptide (Lys-Gly) (interchain with G-Cter in SUMO1); alternate linkage. K298 participates in a covalent cross-link: Glycyl lysine isopeptide (Lys-Gly) (interchain with G-Cter in SUMO2); alternate. Position 302 is a phosphoserine (S302). 2 RRM domains span residues 308–384 (FNLF…KPKG) and 394–467 (RTLL…YTGE). Residue K319 is modified to N6-acetyllysine. A Glycyl lysine isopeptide (Lys-Gly) (interchain with G-Cter in SUMO1); alternate cross-link involves residue K325. A Glycyl lysine isopeptide (Lys-Gly) (interchain with G-Cter in SUMO2); alternate cross-link involves residue K325. K349 is modified (N6-acetyllysine). A Phosphoserine modification is found at S357. A Phosphothreonine modification is found at T368. Residue K371 forms a Glycyl lysine isopeptide (Lys-Gly) (interchain with G-Cter in SUMO2) linkage. A Glycyl lysine isopeptide (Lys-Gly) (interchain with G-Cter in SUMO2); alternate cross-link involves residue K378. An N6-acetyllysine; alternate modification is found at K378. An N6-acetyllysine modification is found at K399. S402 is modified (phosphoserine). T406 bears the Phosphothreonine mark. An N6-acetyllysine mark is found at K428 and K445. 2 positions are modified to phosphoserine: S459 and S461. 2 positions are modified to N6-acetyllysine: K468 and K477. An RRM 3 domain is found at 486-560 (KTLVLSNLSY…RTIRLELQGP (75 aa)). K513 participates in a covalent cross-link: Glycyl lysine isopeptide (Lys-Gly) (interchain with G-Cter in SUMO2); alternate. K513 carries the post-translational modification N6-acetyllysine; alternate. The residue at position 521 (K521) is an N6-acetyllysine. Position 563 is a phosphoserine (S563). K572 is subject to N6-acetyllysine. Residues 572 to 647 (KTLFVKGLSE…NKVTLDWAKP (76 aa)) enclose the RRM 4 domain. Residue K577 forms a Glycyl lysine isopeptide (Lys-Gly) (interchain with G-Cter in SUMO2); alternate linkage. Position 577 is an N6-acetyllysine; alternate (K577). Residue S580 is modified to Phosphoserine. K589 participates in a covalent cross-link: Glycyl lysine isopeptide (Lys-Gly) (interchain with G-Cter in SUMO1); alternate. K589 is covalently cross-linked (Glycyl lysine isopeptide (Lys-Gly) (interchain with G-Cter in SUMO2); alternate). Residues S591 and S619 each carry the phosphoserine modification. A Glycyl lysine isopeptide (Lys-Gly) (interchain with G-Cter in SUMO2) cross-link involves residue K624. Residues 642–714 (LDWAKPKGEG…KPQGKKTKFE (73 aa)) are disordered. Position 646 is an N6-acetyllysine (K646). The span at 650 to 703 (EGGFGGRGGGRGGFGGRGGGRGGGRGGFGGRGRGGFGGRGGFRGGRGGGGGGGD) shows a compositional bias: gly residues. An asymmetric dimethylarginine mark is found at R656, R660, R666, R670, R674, R680, R682, R688, and R692. Asymmetric dimethylarginine; alternate is present on R695. Position 695 is an omega-N-methylarginine; alternate (R695).

Identified in a IGF2BP1-dependent mRNP granule complex containing untranslated mRNAs. Component of the SWAP complex that consists of NPM1, NCL/nucleolin, PARP1 and SWAP70. Component of a complex which is at least composed of HTATSF1/Tat-SF1, the P-TEFb complex components CDK9 and CCNT1, RNA polymerase II, SUPT5H, and NCL/nucleolin. Interacts with AICDA. Interacts with APTX. Interacts with C1QBP. Interacts with ERBB4. Interacts (via C-terminus) with FMR1 isoform 6 (via N-terminus). Interacts with GZF1; this interaction is important for nucleolar localization of GZF1. Interacts with NSUN2. Interacts with NVL. Interacts (via N-terminus domain) with SETX. Interacts (via RRM1 and C-terminal RRM4/Arg/Gly-rich domains) with TERT; the interaction is important for nucleolar localization of TERT. Interacts with WDR46. Interacts with ZFP36. Interacts with LRRC34. Interacts with RRP1B. Interacts with HNRNPU; this interaction occurs during mitosis. Interacts with RIOK1; RIOK1 recruits NCL to PRMT5 for symmetrically methylation. Interacts with ZBTB7B. Interacts with MDK; this interaction promotes NCL clustering and lateral movements of this complex into lipid rafts leading to MDK internalization. Interacts with HDGF. Interacts with ALKBH2. Interacts with IGFBP5; this interaction is necessary for IGFBP5 localization to the nucleus. Interacts with DDX24 (when ubiquitinated); this interaction may be important during ribosome biogenesis. In terms of processing, some glutamate residues are glycylated by TTLL8. This modification occurs exclusively on glutamate residues and results in a glycine chain on the gamma-carboxyl group. Symmetrically methylated by PRMT5.

It is found in the nucleus. The protein localises to the nucleolus. The protein resides in the cytoplasm. In terms of biological role, nucleolin is the major nucleolar protein of growing eukaryotic cells. It is found associated with intranucleolar chromatin and pre-ribosomal particles. It induces chromatin decondensation by binding to histone H1. It is thought to play a role in pre-rRNA transcription and ribosome assembly. May play a role in the process of transcriptional elongation. Binds RNA oligonucleotides with 5'-UUAGGG-3' repeats more tightly than the telomeric single-stranded DNA 5'-TTAGGG-3' repeats. The chain is Nucleolin (NCL) from Mesocricetus auratus (Golden hamster).